The following is a 356-amino-acid chain: Septin-2A (356 aa).

A Septin-type G domain is found at 33 to 305 (KGFEFTLMVV…ENFRSERLKK (273 aa)). The interval 43 to 50 (GESGLGKS) is G1 motif. Residues 43-50 (GESGLGKS), T77, G103, 182-190 (KADTLTLRE), G240, and R255 contribute to the GTP site. Residues 100-103 (DTPG) form a G3 motif region. Residues 181 to 184 (AKAD) are G4 motif. Residues 259-269 (WGVVEVENTEH) form an important for dimerization region.

The protein belongs to the TRAFAC class TrmE-Era-EngA-EngB-Septin-like GTPase superfamily. Septin GTPase family. As to quaternary structure, septins polymerize into heterooligomeric protein complexes that form filaments, and associate with cellular membranes, actin filaments and microtubules. GTPase activity is required for filament formation. Can form heterooligomers with other family members and form filaments. Interacts with wdpcp.

Its subcellular location is the cytoplasm. The protein resides in the cytoskeleton. It is found in the spindle. It localises to the cleavage furrow. The protein localises to the midbody. Its subcellular location is the cell projection. The protein resides in the cilium membrane. Filament-forming cytoskeletal GTPase. Required for normal organization of the actin cytoskeleton. Plays a role in the biogenesis of polarized columnar-shaped epithelium. Required for the progression through mitosis through regulation of chromosome congression. During anaphase, may be required for chromosome segregation and spindle elongation. Probably plays a role in ciliogenesis and collective cell movements including convergent extension during gastrulation. In cilia, required for the integrity of the diffusion barrier at the base of the primary cilium that prevents diffusion of transmembrane proteins between the cilia and plasma membranes. Controls cell shape and not polarization of cells during convergent extension. The sequence is that of Septin-2A (sept2-a) from Xenopus laevis (African clawed frog).